The primary structure comprises 320 residues: o-succinylbenzoate synthase (320 aa).

Lys-133 acts as the Proton donor in catalysis. Asp-161, Glu-190, and Asp-213 together coordinate Mg(2+). The active-site Proton acceptor is the Lys-235.

Belongs to the mandelate racemase/muconate lactonizing enzyme family. MenC type 1 subfamily. It depends on a divalent metal cation as a cofactor.

It carries out the reaction (1R,6R)-6-hydroxy-2-succinyl-cyclohexa-2,4-diene-1-carboxylate = 2-succinylbenzoate + H2O. It functions in the pathway quinol/quinone metabolism; 1,4-dihydroxy-2-naphthoate biosynthesis; 1,4-dihydroxy-2-naphthoate from chorismate: step 4/7. It participates in quinol/quinone metabolism; menaquinone biosynthesis. In terms of biological role, converts 2-succinyl-6-hydroxy-2,4-cyclohexadiene-1-carboxylate (SHCHC) to 2-succinylbenzoate (OSB). The polypeptide is o-succinylbenzoate synthase (Salmonella agona (strain SL483)).